Here is a 207-residue protein sequence, read N- to C-terminus: MLSVFGLRTVARCNSTLASGGARAAAAAGGKAGAQYSALPKSVHALYFQPLKLPVKHHDLVADLQLRAFDNQSLDFFANFALRVGYYLGIPMTGPKPLPTRRERWTVIRAPFAHAKSKENFERHTHKRLLRLWDANPEVVEMFLSYITKHSMAGVGMKCNMFQRESVQLAQELADVPLAPGAPQTADEVVGAKVAELMQSPEFKKHL.

A mitochondrion-targeting transit peptide spans 1-24; the sequence is MLSVFGLRTVARCNSTLASGGARA.

The protein belongs to the universal ribosomal protein uS10 family. Part of the mitochondrial small ribosomal subunit.

Its subcellular location is the mitochondrion. In terms of biological role, involved in mitochondrial genome encoded proteins translation. Involved in the binding of tRNA to the ribosomes. The polypeptide is Small ribosomal subunit protein uS10m (RSM10) (Eremothecium gossypii (strain ATCC 10895 / CBS 109.51 / FGSC 9923 / NRRL Y-1056) (Yeast)).